A 956-amino-acid chain; its full sequence is Thrombospondin-3 (956 aa).

The signal sequence occupies residues 1-21 (MEKPELWGVLALLLLCSYTCG). A Laminin G-like domain is found at 22-193 (SQDLQVIDLL…VESMKIILGG (172 aa)). Intrachain disulfides connect cysteine 278–cysteine 289, cysteine 283–cysteine 300, cysteine 303–cysteine 314, cysteine 320–cysteine 332, cysteine 326–cysteine 341, cysteine 344–cysteine 368, cysteine 374–cysteine 388, cysteine 382–cysteine 397, cysteine 400–cysteine 412, cysteine 418–cysteine 432, cysteine 426–cysteine 442, cysteine 444–cysteine 455, cysteine 471–cysteine 478, cysteine 483–cysteine 503, cysteine 519–cysteine 539, cysteine 542–cysteine 562, cysteine 578–cysteine 598, cysteine 601–cysteine 621, cysteine 639–cysteine 659, cysteine 679–cysteine 699, and cysteine 715–cysteine 936. Asparagine 310 carries N-linked (GlcNAc...) asparagine glycosylation. Residues 316–354 (DINECAHADPCFPGSSCINTMPGFHCEACPPGYKGTRVS) enclose the EGF-like 1; calcium-binding domain. One can recognise an EGF-like 2; calcium-binding domain in the interval 370 to 410 (DIDECNDGNNGGCDPNSICTNTVGSFKCGPCRLGFLGNQSQ). N-linked (GlcNAc...) asparagine glycosylation is present at asparagine 407. Residues 414 to 456 (PARTCHSPAHSPCHIHAHCLFERNGAVSCQCNVGWAGNGNVCG) enclose the EGF-like 3 domain. 8 TSP type-3 repeats span residues 457-491 (PDTD…NSGQ), 492-527 (EDAD…NKDQ), 528-550 (QNSD…NNDQ), 551-586 (KDTD…NPLQ), 587-609 (TDRD…NPTQ), 610-647 (TDAD…NSSQ), 648-687 (LDSD…NPNQ), and 688-723 (KDSD…EVTL). 2 disordered regions span residues 518 to 537 (NCRL…SFGD) and 546 to 699 (PNND…GDVC). Residues 555–568 (GNGEGDACDNDVDG) show a composition bias toward acidic residues. The span at 612–628 (ADSDLVGDVCDTNEDSD) shows a compositional bias: acidic residues. Asparagine 644 carries an N-linked (GlcNAc...) asparagine glycan. Residues 650–667 (SDNDGLGDECDGDDDNDG) are compositionally biased toward acidic residues. The 215-residue stretch at 727–941 (RAYQTVILDP…LQYRCNDTVP (215 aa)) folds into the TSP C-terminal domain. Residue asparagine 937 is glycosylated (N-linked (GlcNAc...) asparagine).

Belongs to the thrombospondin family. As to quaternary structure, oligomer; disulfide-linked. Brain, lung and cartilage.

In terms of biological role, adhesive glycoprotein that mediates cell-to-cell and cell-to-matrix interactions. Can bind to fibrinogen, fibronectin, laminin and type V collagen. The chain is Thrombospondin-3 (Thbs3) from Mus musculus (Mouse).